A 183-amino-acid polypeptide reads, in one-letter code: Copper transporter 4 (183 aa).

The interval 1–21 is disordered; that stretch reads MAMPMPMPPPGPGGDAPPAPT. 2 helical membrane passes run 56 to 76 and 115 to 135; these read VGMY…AEAL and LAYL…LAAV.

Belongs to the copper transporter (Ctr) (TC 1.A.56) family. SLC31A subfamily.

The protein localises to the membrane. In terms of biological role, involved in the transport of copper. This chain is Copper transporter 4 (COPT4), found in Oryza sativa subsp. japonica (Rice).